A 241-amino-acid chain; its full sequence is Accessory protein p30II (241 aa).

2 short sequence motifs (nuclear localization signal) span residues Arg73–Arg78 and Gly91–Arg98. Low complexity-rich tracts occupy residues Cys79–Ser100 and Pro107–Ser136. The disordered stretch occupies residues Cys79–Thr151. The Mitochondrial targeting signal motif lies at Leu175–Arg184.

It belongs to the HTLV-1 accessory protein p30II family. P30II binds to the KIX domains of CREBBP and EP300.

The protein localises to the host nucleus. The protein resides in the host nucleolus. Its subcellular location is the host mitochondrion inner membrane. Functionally, p30II is a multifunctional regulator that sequesters EP300/CREBBP and down-regulates CREB-responsive element (CRE) and Tax-responsive element (TRE) mediated transcription. Specifically binds and represses tax/rex mRNA nuclear export. Since Tax and Rex are positive regulators of viral gene expression, their inhibition by p30II reduces virion production, and allows the virus to escape the host immune surveillance and persist latently in an immune-competent host. In terms of biological role, p13II increases mitochondrial permeability to monovalent cations, producing a rapid, membrane potential-dependent influx of potassium. This could involve a channel-forming activity. Interferes with cell proliferation and transformation and promotes apoptosis induced by ceramide and Fas ligand, probably using the Ras signaling. This Human T-cell leukemia virus 1 (strain Japan ATK-1 subtype A) (HTLV-1) protein is Accessory protein p30II.